Reading from the N-terminus, the 128-residue chain is Aspartate 1-decarboxylase (128 aa).

S25 (schiff-base intermediate with substrate; via pyruvic acid) is an active-site residue. S25 carries the pyruvic acid (Ser) modification. T57 serves as a coordination point for substrate. The active-site Proton donor is the Y58. A substrate-binding site is contributed by 73–75 (GAA).

The protein belongs to the PanD family. In terms of assembly, heterooctamer of four alpha and four beta subunits. The cofactor is pyruvate. In terms of processing, is synthesized initially as an inactive proenzyme, which is activated by self-cleavage at a specific serine bond to produce a beta-subunit with a hydroxyl group at its C-terminus and an alpha-subunit with a pyruvoyl group at its N-terminus.

It localises to the cytoplasm. It catalyses the reaction L-aspartate + H(+) = beta-alanine + CO2. It participates in cofactor biosynthesis; (R)-pantothenate biosynthesis; beta-alanine from L-aspartate: step 1/1. Its function is as follows. Catalyzes the pyruvoyl-dependent decarboxylation of aspartate to produce beta-alanine. The chain is Aspartate 1-decarboxylase from Caldicellulosiruptor saccharolyticus (strain ATCC 43494 / DSM 8903 / Tp8T 6331).